The primary structure comprises 201 residues: Potassium-transporting ATPase KdpC subunit (201 aa).

Residues proline 7–valine 27 traverse the membrane as a helical segment.

This sequence belongs to the KdpC family. In terms of assembly, the system is composed of three essential subunits: KdpA, KdpB and KdpC.

The protein resides in the cell inner membrane. In terms of biological role, part of the high-affinity ATP-driven potassium transport (or Kdp) system, which catalyzes the hydrolysis of ATP coupled with the electrogenic transport of potassium into the cytoplasm. This subunit acts as a catalytic chaperone that increases the ATP-binding affinity of the ATP-hydrolyzing subunit KdpB by the formation of a transient KdpB/KdpC/ATP ternary complex. The polypeptide is Potassium-transporting ATPase KdpC subunit (Methylorubrum extorquens (strain CM4 / NCIMB 13688) (Methylobacterium extorquens)).